Consider the following 148-residue polypeptide: FAD synthase (148 aa).

Residues 14-15, 19-22, and Asp100 contribute to the ATP site; these read VF and HAGH.

The protein belongs to the archaeal FAD synthase family. In terms of assembly, homodimer. Requires a divalent metal cation as cofactor.

It carries out the reaction FMN + ATP + H(+) = FAD + diphosphate. It participates in cofactor biosynthesis; FAD biosynthesis; FAD from FMN: step 1/1. In terms of biological role, catalyzes the transfer of the AMP portion of ATP to flavin mononucleotide (FMN) to produce flavin adenine dinucleotide (FAD) coenzyme. This Pyrococcus horikoshii (strain ATCC 700860 / DSM 12428 / JCM 9974 / NBRC 100139 / OT-3) protein is FAD synthase.